The following is a 431-amino-acid chain: Phosphoribosylamine--glycine ligase (431 aa).

One can recognise an ATP-grasp domain in the interval 109–316 (KDFLARHGIP…LVDLLEAAID (208 aa)). 135-196 (VREKGTPIVV…EEFLDGEEAS (62 aa)) is an ATP binding site. The Mg(2+) site is built by glutamate 286 and asparagine 288.

The protein belongs to the GARS family. Mg(2+) serves as cofactor. Mn(2+) is required as a cofactor.

It catalyses the reaction 5-phospho-beta-D-ribosylamine + glycine + ATP = N(1)-(5-phospho-beta-D-ribosyl)glycinamide + ADP + phosphate + H(+). Its pathway is purine metabolism; IMP biosynthesis via de novo pathway; N(1)-(5-phospho-D-ribosyl)glycinamide from 5-phospho-alpha-D-ribose 1-diphosphate: step 2/2. The protein is Phosphoribosylamine--glycine ligase of Xanthomonas axonopodis pv. citri (strain 306).